Consider the following 170-residue polypeptide: RNA pyrophosphohydrolase (170 aa).

Residues 8–158 (PYRTCVGMML…KRPVYERVVK (151 aa)) enclose the Nudix hydrolase domain. The Nudix box motif lies at 46–67 (GGVDPGEDTWLAAKRELYEETS).

The protein belongs to the Nudix hydrolase family. RppH subfamily. It depends on a divalent metal cation as a cofactor.

In terms of biological role, accelerates the degradation of transcripts by removing pyrophosphate from the 5'-end of triphosphorylated RNA, leading to a more labile monophosphorylated state that can stimulate subsequent ribonuclease cleavage. This Nitrobacter winogradskyi (strain ATCC 25391 / DSM 10237 / CIP 104748 / NCIMB 11846 / Nb-255) protein is RNA pyrophosphohydrolase.